The primary structure comprises 300 residues: Probable endonuclease 4 (300 aa).

Zn(2+)-binding residues include histidine 69, histidine 110, glutamate 145, aspartate 179, histidine 182, histidine 214, aspartate 227, histidine 229, and glutamate 259.

It belongs to the AP endonuclease 2 family. Zn(2+) serves as cofactor.

It carries out the reaction Endonucleolytic cleavage to 5'-phosphooligonucleotide end-products.. Its function is as follows. Endonuclease IV plays a role in DNA repair. It cleaves phosphodiester bonds at apurinic or apyrimidinic (AP) sites, generating a 3'-hydroxyl group and a 5'-terminal sugar phosphate. This Lachnoclostridium phytofermentans (strain ATCC 700394 / DSM 18823 / ISDg) (Clostridium phytofermentans) protein is Probable endonuclease 4.